A 354-amino-acid polypeptide reads, in one-letter code: Quinone-reactive Ni/Fe-hydrogenase small chain (354 aa).

The tat-type signal signal peptide spans 1-36 (MLEEKGIERRDFMKWAGAMTAMLSLPATFTPLTAKA). Positions 53, 56, 153, 186, 224, 227, 252, and 258 each coordinate [4Fe-4S] cluster. Cys267, Cys286, and Cys289 together coordinate [3Fe-4S] cluster.

This sequence belongs to the [NiFe]/[NiFeSe] hydrogenase small subunit family. Heterodimer of a large and a small subunit. Requires [4Fe-4S] cluster as cofactor. It depends on [3Fe-4S] cluster as a cofactor. In terms of processing, predicted to be exported by the Tat system. The position of the signal peptide cleavage has been experimentally proven.

The protein resides in the cell membrane. It carries out the reaction H2 + a menaquinone = a menaquinol. The chain is Quinone-reactive Ni/Fe-hydrogenase small chain (hydA) from Wolinella succinogenes (strain ATCC 29543 / DSM 1740 / CCUG 13145 / JCM 31913 / LMG 7466 / NCTC 11488 / FDC 602W) (Vibrio succinogenes).